A 355-amino-acid chain; its full sequence is Serpentine receptor class epsilon-1 (355 aa).

7 consecutive transmembrane segments (helical) span residues 28–48 (FELLAMIIEIPSFLLVIYATI), 56–76 (LNFIGLFMLLGYYVFLVGRFI), 102–122 (ILSSILQFFYMGCACGISLAV), 144–164 (ISLFLCSEFTVACGVSAIVML), 172–192 (VMAFLGVFISCASFLFYLVLF), 232–252 (VVLFSGVNNFVMAIILTMYMS), and 268–288 (FAFNCCVLLYSFLMLIIIIFS).

This sequence belongs to the nematode receptor-like protein sre family.

It is found in the membrane. The sequence is that of Serpentine receptor class epsilon-1 (sre-1) from Caenorhabditis elegans.